Reading from the N-terminus, the 311-residue chain is Very-long-chain 3-oxoacyl-CoA reductase-B (311 aa).

A helical transmembrane segment spans residues 8 to 28 (LFWVGAVTVLWLSVSSLWSLI). Residue 48–77 (GKWAVVTGATDGIGKAYAEELARRGFAIVL) participates in NADP(+) binding. A helical membrane pass occupies residues 125–145 (IGVLVNNVGVSYSYPEFFLNI). Position 187 (S187) interacts with substrate. Catalysis depends on Y200, which acts as the Proton acceptor. A helical transmembrane segment spans residues 269–289 (GYLPHAIMGWVTASLLPAKLL).

Belongs to the short-chain dehydrogenases/reductases (SDR) family. 17-beta-HSD 3 subfamily.

The protein localises to the endoplasmic reticulum membrane. It carries out the reaction a very-long-chain (3R)-3-hydroxyacyl-CoA + NADP(+) = a very-long-chain 3-oxoacyl-CoA + NADPH + H(+). The catalysed reaction is 17beta-estradiol + NAD(+) = estrone + NADH + H(+). The enzyme catalyses 17beta-estradiol + NADP(+) = estrone + NADPH + H(+). The protein operates within lipid metabolism; fatty acid biosynthesis. It functions in the pathway steroid biosynthesis; estrogen biosynthesis. Its function is as follows. Catalyzes the second of the four reactions of the long-chain fatty acids elongation cycle. This endoplasmic reticulum-bound enzymatic process, allows the addition of two carbons to the chain of long- and very long-chain fatty acids/VLCFAs per cycle. This enzyme has a 3-ketoacyl-CoA reductase activity, reducing 3-ketoacyl-CoA to 3-hydroxyacyl-CoA, within each cycle of fatty acid elongation. Thereby, it may participate in the production of VLCFAs of different chain lengths that are involved in multiple biological processes as precursors of membrane lipids and lipid mediators. May also catalyze the transformation of estrone (E1) into estradiol (E2) and play a role in estrogen formation. In Danio rerio (Zebrafish), this protein is Very-long-chain 3-oxoacyl-CoA reductase-B (hsd17b12b).